Here is a 97-residue protein sequence, read N- to C-terminus: Osteocalcin (97 aa).

The signal sequence occupies residues 1 to 18; it reads MKTLAILVLCSLAAICLT. The propeptide occupies 19-52; it reads SSASAGAQPAGDSPVQGGLFMEKDQASAVVRQTR. The Gla domain maps to 53–93; that stretch reads AAKELTLAQTESLREVCETNMACDEMADAQGIVAAYQAFYG. Ca(2+) is bound by residues Glu-63, Glu-67, Glu-70, and Asp-76. A 4-carboxyglutamate mark is found at Glu-63, Glu-67, and Glu-70. An intrachain disulfide couples Cys-69 to Cys-75. A 4-carboxyglutamate modification is found at Glu-77.

The protein belongs to the osteocalcin/matrix Gla protein family. In terms of processing, gamma-carboxyglutamate residues are formed by vitamin K dependent carboxylation by GGCX. These residues are essential for the binding of calcium. In terms of tissue distribution, in the branchial arches, BGP is found outside the chondrocyte-containing zone. It is found in some cells in the basal zone of the branchial filaments, near the branchial arches, and within the extracellular matrix in the medial zone. In the vertebra, BGP is found in the mineralized bone matrix.

It is found in the secreted. Its function is as follows. The carboxylated form is one of the main organic components of the bone matrix, which constitutes 1-2% of the total bone protein. The carboxylated form binds strongly to apatite and calcium. This is Osteocalcin (bglap) from Argyrosomus regius (Meagre).